The chain runs to 453 residues: Glutamyl-tRNA(Gln) amidotransferase subunit A (453 aa).

Catalysis depends on charge relay system residues Lys53 and Ser128. Ser152 (acyl-ester intermediate) is an active-site residue.

Belongs to the amidase family. GatA subfamily. Heterotrimer of A, B and C subunits.

The enzyme catalyses L-glutamyl-tRNA(Gln) + L-glutamine + ATP + H2O = L-glutaminyl-tRNA(Gln) + L-glutamate + ADP + phosphate + H(+). Functionally, allows the formation of correctly charged Gln-tRNA(Gln) through the transamidation of misacylated Glu-tRNA(Gln) in organisms which lack glutaminyl-tRNA synthetase. The reaction takes place in the presence of glutamine and ATP through an activated gamma-phospho-Glu-tRNA(Gln). The chain is Glutamyl-tRNA(Gln) amidotransferase subunit A from Helicobacter pylori (strain P12).